The following is a 131-amino-acid chain: D-ribose pyranase (131 aa).

The Proton donor role is filled by H20. Residues D28, H98, and 120–122 contribute to the substrate site; that span reads YAN.

It belongs to the RbsD / FucU family. RbsD subfamily. In terms of assembly, homodecamer.

Its subcellular location is the cytoplasm. The catalysed reaction is beta-D-ribopyranose = beta-D-ribofuranose. It functions in the pathway carbohydrate metabolism; D-ribose degradation; D-ribose 5-phosphate from beta-D-ribopyranose: step 1/2. In terms of biological role, catalyzes the interconversion of beta-pyran and beta-furan forms of D-ribose. The chain is D-ribose pyranase from Bacillus cereus (strain 03BB102).